The following is a 392-amino-acid chain: L-lactate dehydrogenase (392 aa).

One can recognise an FMN hydroxy acid dehydrogenase domain in the interval 1 to 380 (MIISASTDYR…GSDSLVTGSA (380 aa)). Tyr24 serves as a coordination point for substrate. FMN contacts are provided by Ser106 and Gln127. Residue Tyr129 participates in substrate binding. An FMN-binding site is contributed by Thr155. Arg164 contacts substrate. Lys251 contacts FMN. The Proton acceptor role is filled by His275. Position 278 (Arg278) interacts with substrate. 306–330 (DSGVRNGLDVVRMIAMGADTILLGR) contacts FMN.

It belongs to the FMN-dependent alpha-hydroxy acid dehydrogenase family. The cofactor is FMN.

It is found in the cell inner membrane. The catalysed reaction is (S)-lactate + A = pyruvate + AH2. Its function is as follows. Catalyzes the conversion of L-lactate to pyruvate. Is coupled to the respiratory chain. This chain is L-lactate dehydrogenase, found in Chromohalobacter salexigens (strain ATCC BAA-138 / DSM 3043 / CIP 106854 / NCIMB 13768 / 1H11).